The primary structure comprises 123 residues: Glycine cleavage system H protein (123 aa).

Residues 22–104 (VATVGITSYA…FGAGWLVKVR (83 aa)) form the Lipoyl-binding domain. At K63 the chain carries N6-lipoyllysine.

The protein belongs to the GcvH family. In terms of assembly, the glycine cleavage system is composed of four proteins: P, T, L and H. (R)-lipoate is required as a cofactor.

The glycine cleavage system catalyzes the degradation of glycine. The H protein shuttles the methylamine group of glycine from the P protein to the T protein. This Clavibacter sepedonicus (Clavibacter michiganensis subsp. sepedonicus) protein is Glycine cleavage system H protein.